The chain runs to 88 residues: Monensin polyketide synthase acyl carrier protein (88 aa).

Positions 5-82 (PFTLADLQRI…ELIDHVNERL (78 aa)) constitute a Carrier domain. Serine 42 is modified (O-(pantetheine 4'-phosphoryl)serine).

Post-translationally, 4'-phosphopantetheine is transferred from CoA to a specific serine of the apo-ACP-like protein.

Its pathway is antifungal biosynthesis; monensin biosynthesis. Its function is as follows. Acyl carrier protein. The polypeptide is Monensin polyketide synthase acyl carrier protein (Streptomyces virginiae (Streptomyces cinnamonensis)).